The chain runs to 89 residues: Defensin-like protein 103 (89 aa).

Residues 1–24 (MAITRKNLVAFCFTILFIISSIHC) form the signal peptide. 4 disulfide bridges follow: cysteine 46–cysteine 84, cysteine 52–cysteine 75, cysteine 61–cysteine 82, and cysteine 65–cysteine 83.

It belongs to the DEFL family.

It is found in the secreted. In Arabidopsis thaliana (Mouse-ear cress), this protein is Defensin-like protein 103.